Consider the following 173-residue polypeptide: Bacterial deubiquitinase-like protein BilC (173 aa).

Zn(2+)-binding residues include H103, H105, and D115.

This sequence belongs to the M67B family. The cofactor is Zn(2+).

In terms of biological role, component of the Bil (bacterial ISG15-like) antiviral defense system, composed of BilA, BilB, BilC and BilD. The Bil system specifically conjugates a ubiquitin-like moiety (bilA) to the bacteriophage central tail fiber (CTF, or tip attachment protein J) via reactions involving E1 (bilD) and E2 (bilB). Modifies CTF of phage SECphi27 and SECphi4, which probably interferes with assembly of the phage tail. Also modifies T5 baseplate hub protein pb3 (gene D16), but not gp27 of phage T6 (Bil defends against T6). BilC is a probable metalloprotease that may cleave non-specifically conjugated targets. Bil-encoding bacteria produce mostly defective phage SECphi27, many of which have phage assembly defects, including no tails. SECphi27 phage progeny produced in E.coli with the Bil system inject less DNA into naive host cells, maybe because the phage are less able to adsorb and inject their DNA into host cells. Functionally, expression of the Bil system in E.coli (strain MG1655) confers about 100-fold resistance to phage SECphi27, SECphi18, SECphi6, SECphi4 and T5, but not to SECphi17. When cells expressing the Bil system are infected by phage SECphi27 at low multiplicity of infection (0.03 MOI) the culture survives, at 3.0 MOI the culture collapses at the same time as cells without the Bil system. Its function is as follows. Cleaves a ubiquitin-GFP (Ubl-GFP) fusion protein in vivo. The sequence is that of Bacterial deubiquitinase-like protein BilC from Collimonas sp. (strain OK412).